The sequence spans 396 residues: Phosphoglycerate kinase (396 aa).

Substrate-binding positions include 21–23, R36, 59–62, R118, and R151; these read DFN and HLGR. ATP contacts are provided by residues K201, G292, E323, and 349 to 352; that span reads GGDS.

The protein belongs to the phosphoglycerate kinase family. As to quaternary structure, monomer.

Its subcellular location is the cytoplasm. It carries out the reaction (2R)-3-phosphoglycerate + ATP = (2R)-3-phospho-glyceroyl phosphate + ADP. The protein operates within carbohydrate degradation; glycolysis; pyruvate from D-glyceraldehyde 3-phosphate: step 2/5. The protein is Phosphoglycerate kinase of Leptospira interrogans serogroup Icterohaemorrhagiae serovar copenhageni (strain Fiocruz L1-130).